Here is a 265-residue protein sequence, read N- to C-terminus: 14-3-3-like protein GF14 nu (265 aa).

A phosphoserine mark is found at serine 67, serine 109, and serine 190. Position 211 is a phosphothreonine (threonine 211). The interval 242-265 (AGGDEIKEASKHEPEEGKPAETGQ) is disordered. Positions 245–265 (DEIKEASKHEPEEGKPAETGQ) are enriched in basic and acidic residues.

This sequence belongs to the 14-3-3 family. In terms of assembly, component of the SERK1 signaling complex, composed of KAPP, CDC48A, GRF6 or GRF7, SERK1, SERK2, SERK3/BAK1 and BRI1. Interacts with DREB1A and DREB1B in the nucleus. Interacts with CINV1.

It localises to the nucleus. The protein resides in the cytoplasm. In terms of biological role, is associated with a DNA binding complex that binds to the G box, a well-characterized cis-acting DNA regulatory element found in plant genes. The chain is 14-3-3-like protein GF14 nu (GRF7) from Arabidopsis thaliana (Mouse-ear cress).